A 356-amino-acid chain; its full sequence is Probable D-xylulose reductase A (356 aa).

Positions 45, 70, and 71 each coordinate Zn(2+). Residue 180–185 participates in NAD(+) binding; sequence GAGPVG.

This sequence belongs to the zinc-containing alcohol dehydrogenase family. It depends on Zn(2+) as a cofactor.

The enzyme catalyses xylitol + NAD(+) = D-xylulose + NADH + H(+). The protein operates within carbohydrate degradation; L-arabinose degradation via L-arabinitol; D-xylulose 5-phosphate from L-arabinose (fungal route): step 4/5. Xylitol dehydrogenase which catalyzes the conversion of xylitol to D-xylulose. Xylose is a major component of hemicelluloses such as xylan. Most fungi utilize D-xylose via three enzymatic reactions, xylose reductase (XR), xylitol dehydrogenase (XDH), and xylulokinase, to form xylulose 5-phosphate, which enters pentose phosphate pathway. This is Probable D-xylulose reductase A (xdhA) from Arthroderma otae (strain ATCC MYA-4605 / CBS 113480) (Microsporum canis).